Reading from the N-terminus, the 215-residue chain is Pyrrolidone-carboxylate peptidase (215 aa).

Residues Glu-78, Cys-141, and His-165 contribute to the active site.

It belongs to the peptidase C15 family. Homotetramer.

The protein resides in the cytoplasm. It catalyses the reaction Release of an N-terminal pyroglutamyl group from a polypeptide, the second amino acid generally not being Pro.. Removes 5-oxoproline from various penultimate amino acid residues except L-proline. This chain is Pyrrolidone-carboxylate peptidase, found in Streptococcus pyogenes serotype M12 (strain MGAS2096).